We begin with the raw amino-acid sequence, 887 residues long: Alanine--tRNA ligase (887 aa).

Zn(2+) is bound by residues His-579, His-583, Cys-681, and His-685.

This sequence belongs to the class-II aminoacyl-tRNA synthetase family. It depends on Zn(2+) as a cofactor.

Its subcellular location is the cytoplasm. It carries out the reaction tRNA(Ala) + L-alanine + ATP = L-alanyl-tRNA(Ala) + AMP + diphosphate. Catalyzes the attachment of alanine to tRNA(Ala) in a two-step reaction: alanine is first activated by ATP to form Ala-AMP and then transferred to the acceptor end of tRNA(Ala). Also edits incorrectly charged Ser-tRNA(Ala) and Gly-tRNA(Ala) via its editing domain. This is Alanine--tRNA ligase from Flavobacterium psychrophilum (strain ATCC 49511 / DSM 21280 / CIP 103535 / JIP02/86).